A 316-amino-acid chain; its full sequence is Vacuolar membrane protein YNL058C (316 aa).

The tract at residues 32–60 (KPTSSVVSETSSKSLPSLTSSAFSTSSGA) is disordered. The chain crosses the membrane as a helical span at residues 93–113 (VYIAVGAVIGAIFISILIWWL). Ser148, Ser256, and Ser276 each carry phosphoserine. The tract at residues 240 to 304 (EEEERKLNLN…KAHKRQAPSM (65 aa)) is disordered. The span at 256–271 (SPERKEKKINSMEGYH) shows a compositional bias: basic and acidic residues.

It belongs to the PRM5 family.

The protein localises to the vacuole membrane. This chain is Vacuolar membrane protein YNL058C, found in Saccharomyces cerevisiae (strain ATCC 204508 / S288c) (Baker's yeast).